We begin with the raw amino-acid sequence, 818 residues long: Probable beta-glucosidase I (818 aa).

An N-linked (GlcNAc...) asparagine glycan is attached at Asn176. Asp204 is an active-site residue. The PA14 domain maps to 374–534 (DGKPGFTFRV…SQEELISNAV (161 aa)). Residues Asn453 and Asn472 are each glycosylated (N-linked (GlcNAc...) asparagine).

It belongs to the glycosyl hydrolase 3 family.

The protein resides in the secreted. It catalyses the reaction Hydrolysis of terminal, non-reducing beta-D-glucosyl residues with release of beta-D-glucose.. It functions in the pathway glycan metabolism; cellulose degradation. Beta-glucosidases are one of a number of cellulolytic enzymes involved in the degradation of cellulosic biomass. Catalyzes the last step releasing glucose from the inhibitory cellobiose. The chain is Probable beta-glucosidase I (bglI) from Aspergillus niger (strain ATCC MYA-4892 / CBS 513.88 / FGSC A1513).